The chain runs to 332 residues: Trace amine-associated receptor 1 (332 aa).

The Extracellular segment spans residues 1–23; the sequence is MHLCHAITNISHRNSDWSREVQA. Asn-9 is a glycosylation site (N-linked (GlcNAc...) asparagine). Residues 24–48 form a helical membrane-spanning segment; that stretch reads SLYSLMSLIILATLVGNLIVIISIS. Topologically, residues 49 to 58 are cytoplasmic; the sequence is HFKQLHTPTN. A helical transmembrane segment spans residues 59 to 80; that stretch reads WLLHSMAIVDFLLGCLIMPCSM. At 81 to 95 the chain is on the extracellular side; that stretch reads VRTVERCWYFGEILC. Residues Cys-95 and Cys-181 are joined by a disulfide bond. A helical membrane pass occupies residues 96 to 118; it reads KVHTSTDIMLSSASIFHLAFISI. Residue Asp-102 participates in 2-phenylethylamine binding. The Cytoplasmic segment spans residues 119 to 138; that stretch reads DRYCAVCDPLRYKAKINIST. Residues 139 to 160 form a helical membrane-spanning segment; it reads ILVMILVSWSLPAVYAFGMIFL. At 161–187 the chain is on the extracellular side; it reads ELNLKGVEELYRSQVSDLGGCSPFFSK. The interval 174–185 is extracellular Loop 2 (ECL2); it reads QVSDLGGCSPFF. The helical transmembrane segment at 188–210 threads the bilayer; that stretch reads VSGVLAFMTSFYIPGSVMLFVYY. The Cytoplasmic segment spans residues 211 to 246; sequence RIYFIAKGQARSINRTNVQVGLEGKSQAPQSKETKA. The helical transmembrane segment at 247-270 threads the bilayer; that stretch reads AKTLGIMVGVFLVCWCPFFLCTVL. The Extracellular portion of the chain corresponds to 271 to 283; sequence DPFLGYVIPPSLN. Residues 284–304 traverse the membrane as a helical segment; sequence DALYWFGYLNSALNPMVYAFF. Residues 305 to 332 lie on the Cytoplasmic side of the membrane; that stretch reads YPWFRRALKMVLLGKIFQKDSSRSKLFL.

Belongs to the G-protein coupled receptor 1 family. Widely distributed throughout the brain. Strongly expressed in the mitral cell layer of the olfactory bulb, piriform cortex, the arcuate, motor, and mesencephalic trigeminal nuclei, lateral reticular and hypoglossal nuclei, cerebellar Purkinje cells, and ventral horn of the spinal cord. Moderately expressed in the frontal, entorhinal, and agranular cortices, the ventral pallidum, thalamus, hippocampus, several hypothalamic nuclei, ambiguus, dorsal raphe, and gigantocellular reticular nuclei. Weakly expressed in the septum, basal ganglia, amygdala, myelencephalon, and spinal cord dorsal horn. Particularly interesting is the moderate expression in several monoaminergic cell groups, namely the dorsal raphe, the locus coeruleus, and the ventral tegmental area.

Its subcellular location is the endomembrane system. It localises to the endoplasmic reticulum membrane. The protein localises to the cell membrane. With respect to regulation, activated by SEP-363856 small molecule: IHCH-7179 acts both as an agonist activator for HTR1A and TAAR1. Intracellular G-protein coupled receptor for trace amines, which recognizes endogenous amine-containing metabolites such as beta-phenylethylamine (beta-PEA), 3-iodothyronamine (T1AM), isoamylamine (IAA), cadaverine (CAD), cyclohexylamine (CHA), p-tyramine (p-TYR), trimethylamine (TMA), octopamine and tryptamine. Also functions as a receptor for various drugs and psychoactive substances, such as amphetamine and methamphetamine. Unresponsive to classical biogenic amines, such as epinephrine and histamine and only partially activated by dopamine and serotonin. Expressed in both the central and peripheral nervous system: TAAR1 activation regulates the activity of several neurotransmitter signaling pathways by (1) decreasing the basal firing rates of the neurons involved and by (2) lowering the sensitivity of receptors to neurotransmitters. Ligand binding causes a conformation change that triggers signaling via guanine nucleotide-binding proteins (G proteins) and modulates the activity of downstream effectors. TAAR1 is coupled with different G(i)/G(o)-, G(s)- or G(q)/G(11) classes of G alpha proteins depending on the ligand. CAD-binding is coupled to G(i)/G(o) G alpha proteins and mediates inhibition of adenylate cyclase activity. T1AM- or beta-PEA-binding is coupled to G(s) G alpha proteins and mediates activation of adenylate cyclase activity. CHA- or IAA-binding is coupled to G(q)/G(11) G alpha proteins and activates phospholipase C-beta, releasing diacylglycerol (DAG) and inositol 1,4,5-trisphosphate (IP3) second messengers. TMA-binding is coupled with all three G(i)/G(o)-, G(s)- or G(q)/G(11) G alpha protein subtypes. This Mus musculus (Mouse) protein is Trace amine-associated receptor 1.